Here is a 269-residue protein sequence, read N- to C-terminus: Tetrahydromethanopterin S-methyltransferase subunit C (269 aa).

Helical transmembrane passes span 18 to 38 (VLVIGAVLSLIGMYIAHFVPS), 39 to 59 (LAMLLGGLLAAGACVAGANTT), 62 to 82 (VAAYGLGTGVPSIGMVSLGMG), 84 to 104 (ISALAGVLIPSVLAGSVALPF), 106 to 126 (LVLATPIIAAVVAIIVGFIVG), 152 to 172 (ALAILGFCTAFAGGFSADLII), 180 to 200 (IIALAFIAAGMSILHPFNACI), and 222 to 242 (LVFSIAKLDIVSILVAAVFWI).

The protein belongs to the MtrC family. The complex is composed of 8 subunits; MtrA, MtrB, MtrC, MtrD, MtrE, MtrF, MtrG and MtrH.

It localises to the cell membrane. It carries out the reaction 5-methyl-5,6,7,8-tetrahydromethanopterin + coenzyme M + 2 Na(+)(in) = 5,6,7,8-tetrahydromethanopterin + methyl-coenzyme M + 2 Na(+)(out). Its pathway is one-carbon metabolism; methanogenesis from CO(2); methyl-coenzyme M from 5,10-methylene-5,6,7,8-tetrahydromethanopterin: step 2/2. In terms of biological role, part of a complex that catalyzes the formation of methyl-coenzyme M and tetrahydromethanopterin from coenzyme M and methyl-tetrahydromethanopterin. This is an energy-conserving, sodium-ion translocating step. This Methanococcus vannielii (strain ATCC 35089 / DSM 1224 / JCM 13029 / OCM 148 / SB) protein is Tetrahydromethanopterin S-methyltransferase subunit C.